Consider the following 165-residue polypeptide: Small ribosomal subunit protein bS16 (165 aa).

The interval 110-165 is disordered; the sequence is LSEANNGPTAEAITEKKKKAREDKEAKEAAEKAAAEKAAAAESEEAPAEEAAAEEA. Basic and acidic residues predominate over residues 129-144; that stretch reads AREDKEAKEAAEKAAA. Positions 151-165 are enriched in acidic residues; that stretch reads ESEEAPAEEAAAEEA.

The protein belongs to the bacterial ribosomal protein bS16 family.

The protein is Small ribosomal subunit protein bS16 of Corynebacterium glutamicum (strain R).